A 375-amino-acid polypeptide reads, in one-letter code: N5-carboxyaminoimidazole ribonucleotide synthase (375 aa).

Residues arginine 108, lysine 148, glycine 153 to glutamine 159, glutamate 183 to leucine 186, glutamate 191, histidine 214, and asparagine 266 to glutamate 267 contribute to the ATP site. Positions lysine 112–threonine 296 constitute an ATP-grasp domain.

Belongs to the PurK/PurT family. In terms of assembly, homodimer.

The catalysed reaction is 5-amino-1-(5-phospho-beta-D-ribosyl)imidazole + hydrogencarbonate + ATP = 5-carboxyamino-1-(5-phospho-D-ribosyl)imidazole + ADP + phosphate + 2 H(+). The protein operates within purine metabolism; IMP biosynthesis via de novo pathway; 5-amino-1-(5-phospho-D-ribosyl)imidazole-4-carboxylate from 5-amino-1-(5-phospho-D-ribosyl)imidazole (N5-CAIR route): step 1/2. Catalyzes the ATP-dependent conversion of 5-aminoimidazole ribonucleotide (AIR) and HCO(3)(-) to N5-carboxyaminoimidazole ribonucleotide (N5-CAIR). The polypeptide is N5-carboxyaminoimidazole ribonucleotide synthase (Staphylococcus epidermidis (strain ATCC 12228 / FDA PCI 1200)).